The chain runs to 435 residues: Hexane cyclase xenF (435 aa).

An N-terminal signal peptide occupies residues 1–23 (MSPAANMFRTLTLTALVSAVVSA). N-linked (GlcNAc...) asparagine glycosylation is found at N81 and N156.

This sequence belongs to the Diels-Alderase family.

The protein operates within mycotoxin biosynthesis. In terms of biological role, hexane cyclase; part of the gene cluster that mediates the biosynthesis of xenoacremones such as xenoacremone A, a compound that shows inhibitory activity toward the PI3K/AKT signaling pathway and which has the ability to induce apoptosis of A549 lung cancer cells. Within the pathway, cooperation of the hybrid PKS-NRPS xenE and the trans-acting enoyl reductase xenG is responsible for the formation of the reduced tyrosine-nonaketide derivative. The alpha/beta hydrolase xenA then accelerates intramolecular nucleophilic attack to give a pyrrolidone derivative. Subsequently, three enzymes, xenF, xenD, and xenC, coordinately participate in the conversion to xenoacremone B. XenF catalyzes sigmatropic rearrangement to form an A-ring, which leads to an unusual intermediate with a hexane ring, which is required for the formation of the tricarbocyclic product. Epoxidation catalyzed by xenD and the formation of the paracyclophane ether catalyzed by xenC initiate a spontaneous intramolecular Diels-Alder (IMDA) reaction to yield xenoacremone B. Spontaneous hydration of xenoacremone B leads to the formation of xenoacremone A, which undergoes subsequent methylation to afford xenoacremone C. The sequence is that of Hexane cyclase xenF from Xenoacremonium sinensis (Endophyte fungus).